The following is a 409-amino-acid chain: Arginine deiminase (409 aa).

C399 (amidino-cysteine intermediate) is an active-site residue.

This sequence belongs to the arginine deiminase family.

It is found in the cytoplasm. The enzyme catalyses L-arginine + H2O = L-citrulline + NH4(+). The protein operates within amino-acid degradation; L-arginine degradation via ADI pathway; carbamoyl phosphate from L-arginine: step 1/2. This is Arginine deiminase from Streptococcus pneumoniae (strain JJA).